Consider the following 729-residue polypeptide: Neurochondrin (729 aa).

N-acetylserine is present on Ser-2. The residue at position 2 (Ser-2) is a Phosphoserine. S-palmitoyl cysteine attachment occurs at residues Cys-3 and Cys-4. Residue Arg-75 is modified to Asymmetric dimethylarginine. Ser-448 is modified (phosphoserine).

The protein belongs to the neurochondrin family. In terms of assembly, interacts with MCHR1. Interacts with SEMA4C. Interacts with DIAPH1 (via FH3 domain). Interacts with GRM5. Post-translationally, palmitoylated. Palmitoylation by ZDHHC1, ZDHHC3 and ZDHHC11 regulates the association of NCDN with endosome membranes. May also be palmitoylated by ZDHHC7. As to expression, expressed in the neuronal, chondral and bone tissues. Expressed in dendrites. Enriched in the brain in the surface layer I-IV. In brains, protein level increases in male but decreases in female with advancing age (at protein level). In adult brains, it is highly expressed in the forebrain and hindbrain. Highly expressed in the hippocampus, piriform cortex, septum, amygdaloid complex, medial geniculate nucleus, inferior colliculus, cerebellar nuclei and the nuclei of the Vth, VIIth, and XIIth cranial nerves. In bone tissues, it is expressed in osteoblasts and osteocytes.

It is found in the cytoplasm. The protein resides in the cytosol. The protein localises to the endosome membrane. It localises to the cell projection. Its subcellular location is the dendrite. It is found in the postsynapse. Probably involved in signal transduction, in the nervous system, via increasing cell surface localization of GRM5 and positively regulating its signaling. Required for the spatial learning process. Acts as a negative regulator of Ca(2+)-calmodulin-dependent protein kinase 2 (CaMK2) phosphorylation. May play a role in modulating melanin-concentrating hormone-mediated functions via its interaction with MCHR1 that interferes with G protein-coupled signal transduction. May be involved in bone metabolism. May also be involved in neurite outgrowth. This Mus musculus (Mouse) protein is Neurochondrin (Ncdn).